A 609-amino-acid polypeptide reads, in one-letter code: mRNA-decapping enzyme 1B (609 aa).

Residue Ala2 is modified to N-acetylalanine. A Phosphoserine modification is found at Ser147. Tyr191 carries the phosphotyrosine modification. Disordered stretches follow at residues 201–222 (PVKP…LDPE) and 243–264 (TVEP…LPIR). The span at 205–219 (SENQQQRIPQPNQTL) shows a compositional bias: polar residues. Ser272 and Ser333 each carry phosphoserine. Disordered regions lie at residues 326-345 (TGPV…GVQN) and 359-438 (TPGA…SSGV). Polar residues predominate over residues 336-345 (NIGTSRGVQN). Low complexity predominate over residues 368-378 (PSTPAPASSAA). Residue Thr389 is modified to Phosphothreonine. The span at 418-438 (QSTLPRQTLPISGNQTGSSGV) shows a compositional bias: polar residues. 2 positions are modified to phosphoserine: Ser440 and Ser503.

The protein belongs to the DCP1 family. Interacts with DCP1A.

It is found in the cytoplasm. Its subcellular location is the nucleus. The catalysed reaction is a 5'-end (N(7)-methyl 5'-triphosphoguanosine)-ribonucleoside in mRNA + H2O = N(7)-methyl-GDP + a 5'-end phospho-ribonucleoside in mRNA + 2 H(+). In terms of biological role, may play a role in the degradation of mRNAs, both in normal mRNA turnover and in nonsense-mediated mRNA decay. May remove the 7-methyl guanine cap structure from mRNA molecules, yielding a 5'-phosphorylated mRNA fragment and 7m-GDP. The chain is mRNA-decapping enzyme 1B (DCP1B) from Pongo abelii (Sumatran orangutan).